A 101-amino-acid chain; its full sequence is Floral defensin-like protein 2 (101 aa).

The N-terminal stretch at 1–25 is a signal peptide; that stretch reads MARSICFFAVAILALMLFAAYETEA. 5 cysteine pairs are disulfide-bonded: cysteine 28–cysteine 74, cysteine 32–cysteine 48, cysteine 39–cysteine 61, cysteine 45–cysteine 68, and cysteine 49–cysteine 70. Residues 75 to 101 constitute a propeptide, removed in mature form; that stretch reads ATEEATATLANEVKTMAEALVEEDMME.

It belongs to the DEFL family. Post-translationally, when compared to other plant defensins, the petunia defensins have an additional fifth disulfide bond. As to expression, petals.

The protein resides in the secreted. The protein localises to the vacuole. Its function is as follows. Plant defense peptide with antifungal activity against F.oxysporum and B.cinerea. The sequence is that of Floral defensin-like protein 2 (D2) from Petunia hybrida (Petunia).